A 449-amino-acid chain; its full sequence is Omega-amino acid--pyruvate aminotransferase (449 aa).

Substrate is bound at residue Trp-60. Residue 119–120 participates in pyridoxal 5'-phosphate binding; sequence GS. Residue Lys-288 is modified to N6-(pyridoxal phosphate)lysine. Thr-327 lines the pyridoxal 5'-phosphate pocket. Residues Arg-414 and Gln-421 each coordinate substrate.

The protein belongs to the class-III pyridoxal-phosphate-dependent aminotransferase family. In terms of assembly, homotetramer. The cofactor is pyridoxal 5'-phosphate.

The catalysed reaction is 3-oxopropanoate + L-alanine = beta-alanine + pyruvate. Functionally, catalyzes transamination between a variety of omega-amino acids, mono and diamines, and pyruvate. Plays a pivotal role in the metabolism of the omega amino acids. This is Omega-amino acid--pyruvate aminotransferase from Pseudomonas putida (Arthrobacter siderocapsulatus).